Consider the following 146-residue polypeptide: Ribosome maturation factor RimP (146 aa).

It belongs to the RimP family.

The protein resides in the cytoplasm. In terms of biological role, required for maturation of 30S ribosomal subunits. The sequence is that of Ribosome maturation factor RimP from Helicobacter pylori (strain HPAG1).